We begin with the raw amino-acid sequence, 137 residues long: NADPH-dependent 7-cyano-7-deazaguanine reductase (137 aa).

The Thioimide intermediate role is filled by C51. D58 (proton donor) is an active-site residue. Residues 73–75 and 92–93 each bind substrate; these read VEL and HE.

The protein belongs to the GTP cyclohydrolase I family. QueF type 1 subfamily.

The protein localises to the cytoplasm. The enzyme catalyses 7-aminomethyl-7-carbaguanine + 2 NADP(+) = 7-cyano-7-deazaguanine + 2 NADPH + 3 H(+). The protein operates within tRNA modification; tRNA-queuosine biosynthesis. Catalyzes the NADPH-dependent reduction of 7-cyano-7-deazaguanine (preQ0) to 7-aminomethyl-7-deazaguanine (preQ1). This Gloeobacter violaceus (strain ATCC 29082 / PCC 7421) protein is NADPH-dependent 7-cyano-7-deazaguanine reductase.